We begin with the raw amino-acid sequence, 232 residues long: NAD(P)H-quinone oxidoreductase subunit K 1 (232 aa).

Cysteine 49, cysteine 50, cysteine 114, and cysteine 145 together coordinate [4Fe-4S] cluster.

Belongs to the complex I 20 kDa subunit family. As to quaternary structure, NDH-1 can be composed of about 15 different subunits; different subcomplexes with different compositions have been identified which probably have different functions. [4Fe-4S] cluster is required as a cofactor.

It localises to the cellular thylakoid membrane. It catalyses the reaction a plastoquinone + NADH + (n+1) H(+)(in) = a plastoquinol + NAD(+) + n H(+)(out). It carries out the reaction a plastoquinone + NADPH + (n+1) H(+)(in) = a plastoquinol + NADP(+) + n H(+)(out). Functionally, NDH-1 shuttles electrons from an unknown electron donor, via FMN and iron-sulfur (Fe-S) centers, to quinones in the respiratory and/or the photosynthetic chain. The immediate electron acceptor for the enzyme in this species is believed to be plastoquinone. Couples the redox reaction to proton translocation, and thus conserves the redox energy in a proton gradient. Cyanobacterial NDH-1 also plays a role in inorganic carbon-concentration. This Acaryochloris marina (strain MBIC 11017) protein is NAD(P)H-quinone oxidoreductase subunit K 1.